Reading from the N-terminus, the 56-residue chain is Preprotein translocase subunit SecG (56 aa).

Topologically, residues 1–29 (MAKDKTTLPPTGAGLMRFFDEDTRAIKVS) are cytoplasmic. A helical transmembrane segment spans residues 30 to 51 (PKGVIAIVLVLIAFEVFLHLFG). The Extracellular portion of the chain corresponds to 52–56 (PSIFG).

This sequence belongs to the SEC61-beta family. Component of the protein translocase complex. Heterotrimer consisting of alpha (SecY), beta (SecG) and gamma (SecE) subunits. Can form oligomers of the heterotrimer.

Its subcellular location is the cell membrane. Functionally, involved in protein export. The function of the beta subunit is unknown, but it may be involved in stabilization of the trimeric complex. This is Preprotein translocase subunit SecG from Thermococcus gammatolerans (strain DSM 15229 / JCM 11827 / EJ3).